Reading from the N-terminus, the 309-residue chain is Replication factor C subunit 4 (309 aa).

Residues valine 5, valine 17, 42–50, asparagine 134, and arginine 192 each bind ATP; that span reads GPPGTGKTT.

Belongs to the activator 1 small subunits family. Component of the replication factor C (RFC) complex.

It localises to the nucleus. Component of ATP-dependent clamp loader (RFC and RFC-like) complexes for DNA clamps. During a clamp loading circle, the RFC:clamp complex binds to DNA and the recognition of the double-stranded/single-stranded junction stimulates ATP hydrolysis by RFC. The complex presumably provides bipartite ATP sites in which one subunit supplies a catalytic site for hydrolysis of ATP bound to the neighboring subunit. Dissociation of RFC from the clamp leaves the clamp encircling DNA. Component of the replication factor C (RFC or activator 1) complex which acts during elongation of primed DNA templates by DNA polymerase delta and epsilon. RFC has an essential but redundant activity in sister chromatid cohesion establishment. This Encephalitozoon cuniculi (strain GB-M1) (Microsporidian parasite) protein is Replication factor C subunit 4 (RFC4).